Reading from the N-terminus, the 211-residue chain is Putative hydrolase SMU_367 (211 aa).

Residues 1–29 (MKKQFLEKAVFTVAATAATVVLGNKMADA) form the signal peptide. The LysM domain occupies 30 to 74 (DTYTLQEGDSFFSVAQRYHMDAYELASMNGKDITSLILPGQTLTV). Positions 77-101 (SAAPDNQAAAPTDTTQATTETNDAN) are disordered. Residues 78–101 (AAPDNQAAAPTDTTQATTETNDAN) are compositionally biased toward low complexity. A Peptidase C51 domain is found at 85-209 (AAPTDTTQAT…GTPGSVSYIY (125 aa)).

This Streptococcus mutans serotype c (strain ATCC 700610 / UA159) protein is Putative hydrolase SMU_367.